A 359-amino-acid chain; its full sequence is Probable dual-specificity RNA methyltransferase RlmN (359 aa).

Residue Glu91 is the Proton acceptor of the active site. A Radical SAM core domain is found at 97 to 329 (QHYGHSVCVT…KKNGVNCVVR (233 aa)). A disulfide bridge connects residues Cys104 and Cys340. [4Fe-4S] cluster-binding residues include Cys111, Cys115, and Cys118. Residues 163 to 164 (GE), Ser195, 218 to 220 (SLH), and Asn296 contribute to the S-adenosyl-L-methionine site. Residue Cys340 is the S-methylcysteine intermediate of the active site.

The protein belongs to the radical SAM superfamily. RlmN family. The cofactor is [4Fe-4S] cluster.

The protein localises to the cytoplasm. It catalyses the reaction adenosine(2503) in 23S rRNA + 2 reduced [2Fe-2S]-[ferredoxin] + 2 S-adenosyl-L-methionine = 2-methyladenosine(2503) in 23S rRNA + 5'-deoxyadenosine + L-methionine + 2 oxidized [2Fe-2S]-[ferredoxin] + S-adenosyl-L-homocysteine. The catalysed reaction is adenosine(37) in tRNA + 2 reduced [2Fe-2S]-[ferredoxin] + 2 S-adenosyl-L-methionine = 2-methyladenosine(37) in tRNA + 5'-deoxyadenosine + L-methionine + 2 oxidized [2Fe-2S]-[ferredoxin] + S-adenosyl-L-homocysteine. In terms of biological role, specifically methylates position 2 of adenine 2503 in 23S rRNA and position 2 of adenine 37 in tRNAs. This chain is Probable dual-specificity RNA methyltransferase RlmN, found in Streptococcus pyogenes serotype M18 (strain MGAS8232).